Here is a 423-residue protein sequence, read N- to C-terminus: vacuole-related protein 17 (423 aa).

Ala-2 carries the post-translational modification N-acetylalanine. The tract at residues 109 to 134 (ATVPNEAPNDSPQSQSTRSSLGSFQP) is disordered. The interval 110-170 (TVPNEAPNDS…NPINEVDCPS (61 aa)) is MYO2-binding. A compositionally biased stretch (polar residues) spans 116-131 (PNDSPQSQSTRSSLGS). Phosphoserine is present on Ser-119. The residue at position 149 (Thr-149) is a Phosphothreonine. The disordered stretch occupies residues 150 to 211 (PSKPPKKSVG…SKKPSSSDTY (62 aa)). Residue Ser-178 is modified to Phosphoserine. Basic residues predominate over residues 182–192 (QPARNRTLRAA). The segment covering 199 to 211 (LNKSKKPSSSDTY) has biased composition (polar residues). Thr-248 is subject to Phosphothreonine. Phosphoserine is present on Ser-269. Residues 290–380 (SASFFRPSNP…ISESFQSKRG (91 aa)) form a VAC8-binding region.

This sequence belongs to the VAC17 family. Interacts with MYO2 and VAC8. Interacts with ATG18.

It localises to the vacuole membrane. Vacuole-specific MYO2 receptor required for vacuole inheritance. Binds simultaneously to MYO2 and to VAC8, a vacuolar membrane protein, forming a transport complex which moves the attached vacuole membrane along actin cables into the bud. Once the vacuole arrives in the bud, VAC17 is degraded, depositing the vacuole in its correct location. This chain is vacuole-related protein 17 (VAC17), found in Saccharomyces cerevisiae (strain ATCC 204508 / S288c) (Baker's yeast).